Consider the following 79-residue polypeptide: Orally active insecticidal peptide (79 aa).

The first 19 residues, 1-19 (MRVLFIIAGLALLSVVCYT), serve as a signal peptide directing secretion. Positions 20-44 (SEMKERSSFNEVLSEFFAADEPQER) are excised as a propeptide. Disulfide bonds link Cys-46-Cys-61, Cys-53-Cys-66, and Cys-60-Cys-73. Position 77 is an alanine amide (Ala-77).

The protein belongs to the neurotoxin 03 (Tx2) family. 01 subfamily. Expressed by the venom gland.

It is found in the secreted. Probable ion channel inhibitor. Shows insecticidal activity when injected into mealworms. This chain is Orally active insecticidal peptide, found in Selenotypus plumipes (Australian featherleg tarantula).